Here is a 536-residue protein sequence, read N- to C-terminus: Light-independent protochlorophyllide reductase subunit B (536 aa).

Asp-36 serves as a coordination point for [4Fe-4S] cluster. Asp-292 acts as the Proton donor in catalysis. Gly-427 to Leu-428 lines the substrate pocket. The segment at Gln-447–Pro-489 is disordered. The segment covering Ser-448–Thr-469 has biased composition (low complexity). The span at Asn-470 to Glu-483 shows a compositional bias: polar residues.

The protein belongs to the ChlB/BchB/BchZ family. As to quaternary structure, protochlorophyllide reductase is composed of three subunits; ChlL, ChlN and ChlB. Forms a heterotetramer of two ChlB and two ChlN subunits. It depends on [4Fe-4S] cluster as a cofactor.

The catalysed reaction is chlorophyllide a + oxidized 2[4Fe-4S]-[ferredoxin] + 2 ADP + 2 phosphate = protochlorophyllide a + reduced 2[4Fe-4S]-[ferredoxin] + 2 ATP + 2 H2O. Its pathway is porphyrin-containing compound metabolism; chlorophyll biosynthesis (light-independent). Functionally, component of the dark-operative protochlorophyllide reductase (DPOR) that uses Mg-ATP and reduced ferredoxin to reduce ring D of protochlorophyllide (Pchlide) to form chlorophyllide a (Chlide). This reaction is light-independent. The NB-protein (ChlN-ChlB) is the catalytic component of the complex. This is Light-independent protochlorophyllide reductase subunit B from Prochlorococcus marinus (strain MIT 9303).